The sequence spans 625 residues: Somatic embryogenesis receptor kinase 1 (625 aa).

An N-terminal signal peptide occupies residues 1-26; the sequence is MESSYVVFILLSLILLPNHSLWLASA. Over 27 to 238 the chain is Extracellular; sequence NLEGDALHTL…STPSGYGITG (212 aa). An intrachain disulfide couples Cys58 to Cys65. Leucine-rich repeat receptor-like protein kinase binding stretches follow at residues 59 to 78 and 97 to 102; these read TWFHVTCNNENSVIRVDLGN and YLELYS. Residue 61-62 participates in brassinolide binding; it reads FH. LRR repeat units lie at residues 92-116, 118-140, 141-164, and 165-189; these read LKNLQYLELYSNNITGPIPSNLGNL, NLVSLDLYLNSFSGPIPESLGKL, SKLRFLRLNNNSLTGSIPMSLTNI, and TTLQVLDLSNNRLSGSVPDNGSFSL. N-linked (GlcNAc...) asparagine glycosylation is found at Asn104 and Asn115. Leucine-rich repeat receptor-like protein kinase binding regions lie at residues 123 to 126 and 145 to 147; these read DLYL and FLR. Asn150, Asn163, and Asn184 each carry an N-linked (GlcNAc...) asparagine glycan. The segment at 171–194 is leucine-rich repeat receptor-like protein kinase binding; that stretch reads DLSNNRLSGSVPDNGSFSLFTPIS. A disulfide bridge links Cys202 with Cys210. The helical transmembrane segment at 239–259 threads the bilayer; that stretch reads AIAGGVAAGAALLFAAPAIAF. Over 260 to 625 the chain is Cytoplasmic; it reads AWWRRRKPLD…LHAVELSGPR (366 aa). Phosphoserine is present on residues Ser291, Ser299, and Ser303. The Protein kinase domain maps to 302 to 589; that stretch reads FSNKNILGRG…GLAEKWDEWQ (288 aa). 308–316 lines the ATP pocket; it reads LGRGGFGKV. At Thr325 the chain carries Phosphothreonine. Lys330 is a binding site for ATP. Thr337 and Thr346 each carry phosphothreonine. Ser352, Ser383, Ser386, and Ser394 each carry phosphoserine. A Phosphothreonine modification is found at Thr402. Ser415 carries the post-translational modification Phosphoserine. The Proton acceptor role is filled by Asp429. Tyr456 is subject to Phosphotyrosine. 4 positions are modified to phosphothreonine: Thr459, Thr462, Thr463, and Thr468. At Tyr476 the chain carries Phosphotyrosine. Position 478 is a phosphoserine (Ser478). A Phosphothreonine modification is found at Thr479. Ser483 carries the post-translational modification Phosphoserine. Thr541 carries the post-translational modification Phosphothreonine. Tyr543 carries the post-translational modification Phosphotyrosine. Thr559 is modified (phosphothreonine). A phosphoserine mark is found at Ser606 and Ser612. Phosphothreonine is present on Thr613. Tyr614 carries the post-translational modification Phosphotyrosine. Ser622 bears the Phosphoserine mark.

The protein belongs to the protein kinase superfamily. Ser/Thr protein kinase family. Monomer, homo- and heterodimer. Interacts with KAPP, CDC48A, GRF6 or GRF7, SERK2, BRI1 and SERK3/BAK1 to form the SERK1 signaling complex. Bind to BRI1 in a brassinolide-dependent manner. Heterodimer with PSKR1. Interacts with the EF-Tu receptor EFR and FLS2 in a specific ligand-induced manner. Interacts with ERECTA in a EPF2-induced manner. Interacts with ERL1 in a EPF1-induced manner. Interacts with TMM. In the presence of the signal peptide RGF1, interacts with RGI1/RGFR4/RCH2, RGI2/RGFR3/RCH1, RGI3/RGFR1, RGI4/RGFR2/SKM2 and RGI5/RGFR5. Mg(2+) serves as cofactor. Glycosylated. Important for targeting to the plasma membrane. In terms of processing, intermolecular autophosphorylation. The catalytic activity of SERK1 depends on the presence of a phosphorylated Thr residue in SERK1. The phosphorylation is induced by brassinosteroids. Transphosphorylation by BRI1 occurs only on Ser-299 and Thr-462. Dephosphorylation of threonine residues by the kinase-associated protein phosphatase (KAPP) is involved in SERK1 endocytosis. In terms of tissue distribution, expressed in flowers, tapetum, developing microspores, all cells of the embryo sac, provascular strands and developing vascular bundles. Low expression in adult vascular tissue. Detected in root meristem.

Its subcellular location is the cell membrane. The protein localises to the endoplasmic reticulum membrane. The catalysed reaction is L-seryl-[protein] + ATP = O-phospho-L-seryl-[protein] + ADP + H(+). It catalyses the reaction L-threonyl-[protein] + ATP = O-phospho-L-threonyl-[protein] + ADP + H(+). It carries out the reaction L-tyrosyl-[protein] + ATP = O-phospho-L-tyrosyl-[protein] + ADP + H(+). Its activity is regulated as follows. Inhibited by manganese. Its function is as follows. Dual specificity kinase acting on both serine/threonine- and tyrosine-containing substrates. Phosphorylates BRI1 on 'Ser-887' and CDC48 on at least one threonine residue and on 'Ser-41'. Confers embryogenic competence. Acts redundantly with SERK2 as a control point for sporophytic development controlling male gametophyte production. Involved in the brassinolide signaling pathway. Probably required during small peptide (e.g. RGF1) signaling. Involved in the perception of phytosulfokine and subsequent signal transduction. Acts as a RLK5 coreceptor and promotes high-affinity IDA sensing, thus being a positive regulator of floral abscission. This Arabidopsis thaliana (Mouse-ear cress) protein is Somatic embryogenesis receptor kinase 1.